The following is an 88-amino-acid chain: UPF0147 protein Ta0600 (88 aa).

The protein belongs to the UPF0147 family.

This chain is UPF0147 protein Ta0600, found in Thermoplasma acidophilum (strain ATCC 25905 / DSM 1728 / JCM 9062 / NBRC 15155 / AMRC-C165).